The sequence spans 545 residues: Cytochrome bc1 complex cytochrome b subunit (545 aa).

Residues 54–74 traverse the membrane as a helical segment; the sequence is VCLYSFIIIILTGVYLTLFFH. The heme site is built by His118 and His132. 3 helical membrane-spanning segments follow: residues 122–142, 150–170, and 182–202; these read ALIF…TGAF, WLFG…GYSL, and FMEG…FFLF. The heme site is built by His219 and His234. The next 5 helical transmembrane spans lie at 220-240, 269-289, 335-355, 385-405, and 413-433; these read ILLL…LVFY, AGGF…IATI, LVLG…AIAV, FGVA…NDLW, and INAI…VAFI.

It belongs to the cytochrome b family. The cytochrome bc1 complex is composed of a cytochrome b (QcrB), the Rieske iron-sulfur protein (QcrA) and a diheme cytochrome c (QcrC) subunit. It depends on heme as a cofactor.

It localises to the cell membrane. The enzyme catalyses a quinol + 2 Fe(III)-[cytochrome c](out) = a quinone + 2 Fe(II)-[cytochrome c](out) + 2 H(+)(out). Its function is as follows. Cytochrome b subunit of the cytochrome bc1 complex, an essential component of the respiratory electron transport chain required for ATP synthesis. The bc1 complex catalyzes the oxidation of ubiquinol and the reduction of cytochrome c in the respiratory chain. The bc1 complex operates through a Q-cycle mechanism that couples electron transfer to generation of the proton gradient that drives ATP synthesis. The cytochrome b subunit contains two ubiquinol reactive sites: the oxidation (QP) site and the reduction (QN) site. The polypeptide is Cytochrome bc1 complex cytochrome b subunit (qcrB) (Streptomyces coelicolor (strain ATCC BAA-471 / A3(2) / M145)).